The chain runs to 212 residues: COP9 signalosome complex subunit 8 (212 aa).

The PCI domain maps to 26–193 (TSLSAYEEQA…KPVVTAPPKD (168 aa)).

The protein belongs to the CSN8 family. Component of the COP9 signalosome (CSN) complex.

It is found in the cytoplasm. Its subcellular location is the nucleus. Its function is as follows. Component of the COP9 signalosome (CSN) complex that acts as an regulator of the ubiquitin (Ubl) conjugation pathway by mediating the deneddylation of the cullin subunit of SCF-type E3 ubiquitin-protein ligase complexes. The CSN complex seems to link protein degradation to sexual development. The polypeptide is COP9 signalosome complex subunit 8 (csnH) (Emericella nidulans (strain FGSC A4 / ATCC 38163 / CBS 112.46 / NRRL 194 / M139) (Aspergillus nidulans)).